The sequence spans 70 residues: DNA-directed RNA polymerase subunit omega (70 aa).

The protein belongs to the RNA polymerase subunit omega family. The RNAP catalytic core consists of 2 alpha, 1 beta, 1 beta' and 1 omega subunit. When a sigma factor is associated with the core the holoenzyme is formed, which can initiate transcription.

It carries out the reaction RNA(n) + a ribonucleoside 5'-triphosphate = RNA(n+1) + diphosphate. Promotes RNA polymerase assembly. Latches the N- and C-terminal regions of the beta' subunit thereby facilitating its interaction with the beta and alpha subunits. This chain is DNA-directed RNA polymerase subunit omega, found in Shouchella clausii (strain KSM-K16) (Alkalihalobacillus clausii).